The sequence spans 409 residues: Protein naked cuticle homolog 2 (409 aa).

Glycine 2 is lipidated: N-myristoyl glycine. The EF-hand domain occupies 109 to 144; it reads AEDNRQEWVFTLYDFDNSGKVTKEDMSSLMHTIYDV. Residues aspartate 122, aspartate 124, serine 126, lysine 128, and aspartate 133 each coordinate Ca(2+). Disordered regions lie at residues 160–224, 243–315, 346–366, and 388–409; these read LRVK…YCVD, TSRF…RYPG, SHTHAHTPSGLQHSHSRRIRS, and RHEHHHHHEHHHHHHYHHYHQT. Composition is skewed to basic and acidic residues over residues 171-185 and 193-224; these read AARRRDATHTERETS and VRSEEHRSADRRQSTHIRGQTEAHEGNHYCVD. Residues 247–268 show a composition bias toward low complexity; the sequence is DSSSPDADQDPPSRSSHSQSRP. Basic residues predominate over residues 389 to 409; sequence HEHHHHHEHHHHHHYHHYHQT.

Belongs to the NKD family. In terms of tissue distribution, expressed ubiquitously until 1 dpf, when expression becomes confined to the anterior CNS, with slight expression in the developing tail.

The protein localises to the cell membrane. It localises to the cytoplasm. Cell autonomous antagonist of both the canonical and non-canonical Wnt signaling pathways. The chain is Protein naked cuticle homolog 2 (nkd2) from Danio rerio (Zebrafish).